The following is a 381-amino-acid chain: Fatty acid elongase 6 (381 aa).

7 helical membrane passes run 10–30 (IAAAIEVPDWVLTKSAALVYS), 69–89 (LPYLNPWHVIASILAYLSLIV), 107–127 (GLVHNLGLHLLSLYMSLGLMI), 153–173 (LIWLFYVSKVVEWVDTVIMLL), 182–202 (FLHVYHHTTVFVLWWLALLVA), 216–236 (GVHVFMYGYYFLTLLFPSGIV), and 280–300 (LLQILFWYMISLLALFGNFLV). The HxxHH motif signature appears at 184–188 (HVYHH). The Nucleophile role is filled by histidine 187. The segment at 362–381 (RKNGNGNGQKASLQAMAGSR) is disordered.

Belongs to the ELO family.

It is found in the membrane. The protein operates within lipid metabolism; polyunsaturated fatty acid biosynthesis. Its function is as follows. Involved in the synthesis of fatty acids. Elongates C18 polyunsaturated fatty acids (PUFAs) with a preference for Delta6 PUFAs. In Leishmania major, this protein is Fatty acid elongase 6.